The chain runs to 492 residues: Glutamyl-tRNA(Gln) amidotransferase subunit A (492 aa).

Active-site charge relay system residues include K78 and S158. S182 (acyl-ester intermediate) is an active-site residue.

This sequence belongs to the amidase family. GatA subfamily. In terms of assembly, heterotrimer of A, B and C subunits.

It catalyses the reaction L-glutamyl-tRNA(Gln) + L-glutamine + ATP + H2O = L-glutaminyl-tRNA(Gln) + L-glutamate + ADP + phosphate + H(+). In terms of biological role, allows the formation of correctly charged Gln-tRNA(Gln) through the transamidation of misacylated Glu-tRNA(Gln) in organisms which lack glutaminyl-tRNA synthetase. The reaction takes place in the presence of glutamine and ATP through an activated gamma-phospho-Glu-tRNA(Gln). This chain is Glutamyl-tRNA(Gln) amidotransferase subunit A, found in Zymomonas mobilis subsp. mobilis (strain ATCC 31821 / ZM4 / CP4).